We begin with the raw amino-acid sequence, 476 residues long: Bifunctional protein HldE (476 aa).

Residues 1 to 319 form a ribokinase region; the sequence is MKVTLPAFEK…EALKSHQGES (319 aa). 195–198 is a binding site for ATP; sequence NMSE. The active site involves aspartate 264. Residues 345–476 are cytidylyltransferase; that stretch reads MTNGCFDILH…AIIQNIMSRH (132 aa).

It in the N-terminal section; belongs to the carbohydrate kinase PfkB family. In the C-terminal section; belongs to the cytidylyltransferase family. Homodimer.

The catalysed reaction is D-glycero-beta-D-manno-heptose 7-phosphate + ATP = D-glycero-beta-D-manno-heptose 1,7-bisphosphate + ADP + H(+). It catalyses the reaction D-glycero-beta-D-manno-heptose 1-phosphate + ATP + H(+) = ADP-D-glycero-beta-D-manno-heptose + diphosphate. It functions in the pathway nucleotide-sugar biosynthesis; ADP-L-glycero-beta-D-manno-heptose biosynthesis; ADP-L-glycero-beta-D-manno-heptose from D-glycero-beta-D-manno-heptose 7-phosphate: step 1/4. The protein operates within nucleotide-sugar biosynthesis; ADP-L-glycero-beta-D-manno-heptose biosynthesis; ADP-L-glycero-beta-D-manno-heptose from D-glycero-beta-D-manno-heptose 7-phosphate: step 3/4. Functionally, catalyzes the phosphorylation of D-glycero-D-manno-heptose 7-phosphate at the C-1 position to selectively form D-glycero-beta-D-manno-heptose-1,7-bisphosphate. Catalyzes the ADP transfer from ATP to D-glycero-beta-D-manno-heptose 1-phosphate, yielding ADP-D-glycero-beta-D-manno-heptose. In Shewanella amazonensis (strain ATCC BAA-1098 / SB2B), this protein is Bifunctional protein HldE.